A 365-amino-acid chain; its full sequence is Peptide chain release factor 2 (365 aa).

Position 252 is an N5-methylglutamine (Gln-252).

Belongs to the prokaryotic/mitochondrial release factor family. In terms of processing, methylated by PrmC. Methylation increases the termination efficiency of RF2.

Its subcellular location is the cytoplasm. Functionally, peptide chain release factor 2 directs the termination of translation in response to the peptide chain termination codons UGA and UAA. This chain is Peptide chain release factor 2, found in Escherichia coli O8 (strain IAI1).